A 621-amino-acid polypeptide reads, in one-letter code: Chaperone protein DnaK (621 aa).

Position 175 is a phosphothreonine; by autocatalysis (threonine 175). Basic and acidic residues predominate over residues 499–516 (EAHEADDKKRKEDAETRN). Disordered regions lie at residues 499–520 (EAHE…NAEN) and 583–621 (AQQG…KDNK). A compositionally biased stretch (low complexity) spans 583–602 (AQQGAEGAAGAADSGSANNG). Residues 603–621 (GDDDVVDAEVVDDDDKDNK) are compositionally biased toward acidic residues.

Belongs to the heat shock protein 70 family.

Functionally, acts as a chaperone. This is Chaperone protein DnaK from Bifidobacterium animalis subsp. lactis (strain AD011).